The sequence spans 601 residues: Glutathione-regulated potassium-efflux system protein KefB (601 aa).

The next 13 membrane-spanning stretches (helical) occupy residues 4–24 (SDLLLAGVLFLFAAVIAVPLA), 29–49 (IGAVLGYLLAGIAIGPWGLGF), 55–75 (EILHFSELGVVFLMFIIGLEL), 87–107 (IFGVGAAQVMLSAAILGGLLM), 115–135 (AAVVGGIGLAMSSTAMALQLM), 152–172 (VLLFQDLAVIPALALVPLLAG), 177–197 (HVNWLTVGMKVLAFAGMLIGG), 207–227 (FIASSGVREVFTAATLLLVLG), 230–250 (LFMEALGLSMALGTFIAGVLL), 268–288 (GLLLGLFFISVGMALNLGVLY), 291–311 (LLWVAVSVAVLVAVKMLVLYL), 326–346 (FAGVLSQGGEFAFVLFSLPAS), and 356–376 (ALLLVAVTLSMMTTPLLMKGI). An RCK N-terminal domain is found at 400–519 (KPQVIIVGFG…AGVTQFSRET (120 aa)).

This sequence belongs to the monovalent cation:proton antiporter 2 (CPA2) transporter (TC 2.A.37) family. KefB subfamily. Interacts with the regulatory subunit KefG.

It localises to the cell inner membrane. Functionally, pore-forming subunit of a potassium efflux system that confers protection against electrophiles. Catalyzes K(+)/H(+) antiport. The chain is Glutathione-regulated potassium-efflux system protein KefB from Klebsiella pneumoniae subsp. pneumoniae (strain ATCC 700721 / MGH 78578).